Here is a 619-residue protein sequence, read N- to C-terminus: 1-deoxy-D-xylulose-5-phosphate synthase (619 aa).

Residues His-80 and 121–123 (GHS) each bind thiamine diphosphate. A Mg(2+)-binding site is contributed by Asp-152. Thiamine diphosphate is bound by residues 153-154 (GA), Asn-181, Tyr-288, and Glu-370. Position 181 (Asn-181) interacts with Mg(2+).

This sequence belongs to the transketolase family. DXPS subfamily. In terms of assembly, homodimer. It depends on Mg(2+) as a cofactor. Thiamine diphosphate serves as cofactor.

It carries out the reaction D-glyceraldehyde 3-phosphate + pyruvate + H(+) = 1-deoxy-D-xylulose 5-phosphate + CO2. It participates in metabolic intermediate biosynthesis; 1-deoxy-D-xylulose 5-phosphate biosynthesis; 1-deoxy-D-xylulose 5-phosphate from D-glyceraldehyde 3-phosphate and pyruvate: step 1/1. In terms of biological role, catalyzes the acyloin condensation reaction between C atoms 2 and 3 of pyruvate and glyceraldehyde 3-phosphate to yield 1-deoxy-D-xylulose-5-phosphate (DXP). The protein is 1-deoxy-D-xylulose-5-phosphate synthase of Yersinia pestis (strain Pestoides F).